Reading from the N-terminus, the 118-residue chain is Ribosome-binding factor A (118 aa).

This sequence belongs to the RbfA family. As to quaternary structure, monomer. Binds 30S ribosomal subunits, but not 50S ribosomal subunits or 70S ribosomes.

Its subcellular location is the cytoplasm. Its function is as follows. One of several proteins that assist in the late maturation steps of the functional core of the 30S ribosomal subunit. Associates with free 30S ribosomal subunits (but not with 30S subunits that are part of 70S ribosomes or polysomes). Required for efficient processing of 16S rRNA. May interact with the 5'-terminal helix region of 16S rRNA. The sequence is that of Ribosome-binding factor A from Latilactobacillus sakei subsp. sakei (strain 23K) (Lactobacillus sakei subsp. sakei).